Consider the following 396-residue polypeptide: Glideosome-associated protein 50 (396 aa).

Residues 1 to 369 (MNYCKTTFHI…PMGNKDTFVR (369 aa)) are Lumenal-facing. His195 and His256 together coordinate a metal cation. The chain crosses the membrane as a helical span at residues 370 to 390 (VVGTIGILIGSVIVFIGASSF). The Cytoplasmic segment spans residues 391–396 (LSKNMK).

The protein belongs to the metallophosphoesterase superfamily. Purple acid phosphatase family. As to quaternary structure, component of the glideosome complex composed of GAP50, GAP45, MTIP and MyoA; the complex is formed during the late schizont stage and in merozoites. MyoA, MTIP and GAP45 probably form an initial complex in the cytoplasm which is then recruited to the outer face of the inner membrane complex via the interaction with GAP50. Interacts with GAP45; the interaction is independent of GAP45 phosphorylation status and can also occur independently of the formation of the glideosome complex. Interacts with human factor H isoform CFH (via sushi 6-7 domains) and isoform FHL-1 (via sushi 6-7 domains); the interaction occurs in the vector mosquito midgut at the surface of activated gametocytes; the interaction protects the parasite from alternative complement pathway-mediated elimination. It depends on a metal cation as a cofactor. In terms of processing, the N-terminus signal is likely to be cleaved.

It is found in the inner membrane complex. It localises to the cell membrane. The protein resides in the endoplasmic reticulum membrane. It carries out the reaction a phosphate monoester + H2O = an alcohol + phosphate. Its activity is regulated as follows. Activity is independent of metal ions. In terms of biological role, component of the glideosome complex, an inner membrane complex structure involved in parasite gliding motility and host cell invasion. During the asexual blood stage, may play a role in the assembly and anchoring of the glideosome complex to the inner membrane complex. During the sexual stage in the vector mosquito midgut, protects gametocytes against host alternative complement pathway-mediated elimination by interacting with host complement inhibitor factor H. Has phosphatase activity towards nucleotides such as ATP, vitamins B1 and B6, phosphorylated sugars, glycerol phosphates and inositol triphosphates. However, the phosphatase activity is controversial. The protein is Glideosome-associated protein 50 of Plasmodium falciparum (isolate 3D7).